The chain runs to 445 residues: Exodeoxyribonuclease 7 large subunit (445 aa).

The protein belongs to the XseA family. As to quaternary structure, heterooligomer composed of large and small subunits.

Its subcellular location is the cytoplasm. The catalysed reaction is Exonucleolytic cleavage in either 5'- to 3'- or 3'- to 5'-direction to yield nucleoside 5'-phosphates.. Functionally, bidirectionally degrades single-stranded DNA into large acid-insoluble oligonucleotides, which are then degraded further into small acid-soluble oligonucleotides. The sequence is that of Exodeoxyribonuclease 7 large subunit from Staphylococcus epidermidis (strain ATCC 35984 / DSM 28319 / BCRC 17069 / CCUG 31568 / BM 3577 / RP62A).